A 469-amino-acid polypeptide reads, in one-letter code: GTPase Der (469 aa).

EngA-type G domains lie at 3 to 167 (PTVA…PDEV) and 175 to 348 (PKFA…RAAM). GTP-binding positions include 9–16 (GRPNVGKS), 56–60 (DTGGF), 119–122 (NKAE), 181–188 (GRPNVGKS), 228–232 (DTAGV), and 293–296 (NKWD). The KH-like domain occupies 349 to 433 (SKLATPKLTR…PLRVQYKSSE (85 aa)). The tract at residues 429–469 (YKSSENPFDNDEKDKPRAKPKPMSKMRGREKEVRYGKNSKK) is disordered.

The protein belongs to the TRAFAC class TrmE-Era-EngA-EngB-Septin-like GTPase superfamily. EngA (Der) GTPase family. As to quaternary structure, associates with the 50S ribosomal subunit.

Its function is as follows. GTPase that plays an essential role in the late steps of ribosome biogenesis. The polypeptide is GTPase Der (Chromobacterium violaceum (strain ATCC 12472 / DSM 30191 / JCM 1249 / CCUG 213 / NBRC 12614 / NCIMB 9131 / NCTC 9757 / MK)).